Consider the following 114-residue polypeptide: Large ribosomal subunit protein uL22c (114 aa).

This sequence belongs to the universal ribosomal protein uL22 family. Part of the 50S ribosomal subunit.

It localises to the plastid. The protein localises to the chloroplast. Functionally, this protein binds specifically to 23S rRNA. Its function is as follows. The globular domain of the protein is located near the polypeptide exit tunnel on the outside of the subunit, while an extended beta-hairpin is found that lines the wall of the exit tunnel in the center of the 70S ribosome. This chain is Large ribosomal subunit protein uL22c (rpl22), found in Gracilaria tenuistipitata var. liui (Red alga).